Reading from the N-terminus, the 215-residue chain is Adenylate kinase (215 aa).

10-15 is an ATP binding site; the sequence is GAGKGT. An NMP region spans residues 30-59; sequence STGDMLRSAIKSGSELGKKAKQVMDAGQLV. AMP is bound by residues T31, R36, 57 to 59, 85 to 88, and Q92; these read QLV and GFPR. An LID region spans residues 122–159; it reads GRRVHPGSGRVYHVEHNPPKVEGKDDETGEDLVVRPDD. Residues R123 and 132-133 contribute to the ATP site; that span reads VY. The disordered stretch occupies residues 128–151; it reads GSGRVYHVEHNPPKVEGKDDETGE. Over residues 133-144 the composition is skewed to basic and acidic residues; that stretch reads YHVEHNPPKVEG. Positions 156 and 167 each coordinate AMP. Residues 195–215 form a disordered region; that stretch reads KIDGTQPVERVSEQLGDLLRK. An ATP-binding site is contributed by Q200.

Belongs to the adenylate kinase family. In terms of assembly, monomer.

Its subcellular location is the cytoplasm. It catalyses the reaction AMP + ATP = 2 ADP. It participates in purine metabolism; AMP biosynthesis via salvage pathway; AMP from ADP: step 1/1. Functionally, catalyzes the reversible transfer of the terminal phosphate group between ATP and AMP. Plays an important role in cellular energy homeostasis and in adenine nucleotide metabolism. The polypeptide is Adenylate kinase (Idiomarina loihiensis (strain ATCC BAA-735 / DSM 15497 / L2-TR)).